The following is a 494-amino-acid chain: Alpha-amylase 1 (494 aa).

An N-terminal signal peptide occupies residues 1–18 (MFLAKSIVCLALLAVANA). C46 and C102 are disulfide-bonded. N116, R165, and D174 together coordinate Ca(2+). C153 and C167 are joined by a disulfide. A chloride-binding site is contributed by R202. Residue D204 is the Nucleophile of the active site. H208 contacts Ca(2+). Residue E241 is the Proton donor of the active site. N304 and R343 together coordinate chloride. Residues 350–370 (FTDTDQGPPTTDGQNIASPSF) are disordered. Positions 351-363 (TDTDQGPPTTDGQ) are enriched in low complexity. Cystine bridges form between C376–C382 and C448–C460.

This sequence belongs to the glycosyl hydrolase 13 family. As to quaternary structure, monomer. Requires Ca(2+) as cofactor. Chloride serves as cofactor.

It catalyses the reaction Endohydrolysis of (1-&gt;4)-alpha-D-glucosidic linkages in polysaccharides containing three or more (1-&gt;4)-alpha-linked D-glucose units.. The polypeptide is Alpha-amylase 1 (Amy35) (Drosophila ananassae (Fruit fly)).